We begin with the raw amino-acid sequence, 241 residues long: Alpha/beta-tubulin-N-acetyltransferase 9 (241 aa).

Residues E34–P181 form the N-acetyltransferase domain.

This sequence belongs to the acetyltransferase family. GNAT subfamily.

It carries out the reaction N-terminal L-methionyl-[tubulin] + acetyl-CoA = N-terminal N(alpha)-acetyl-L-methionyl-[tubulin] + CoA + H(+). Functionally, N-acetyltransferase that mediates the acetylation of the N-terminal residues of alpha- and beta-tubulin. This chain is Alpha/beta-tubulin-N-acetyltransferase 9 (Nat9), found in Mus musculus (Mouse).